The following is a 101-amino-acid chain: NADH-quinone oxidoreductase subunit K (101 aa).

The next 3 membrane-spanning stretches (helical) occupy residues 4–24 (LAHF…GIFL), 30–50 (IVLL…FVAF), and 61–81 (VFVF…LAIL).

Belongs to the complex I subunit 4L family. As to quaternary structure, NDH-1 is composed of 14 different subunits. Subunits NuoA, H, J, K, L, M, N constitute the membrane sector of the complex.

The protein resides in the cell inner membrane. The enzyme catalyses a quinone + NADH + 5 H(+)(in) = a quinol + NAD(+) + 4 H(+)(out). Its function is as follows. NDH-1 shuttles electrons from NADH, via FMN and iron-sulfur (Fe-S) centers, to quinones in the respiratory chain. The immediate electron acceptor for the enzyme in this species is believed to be ubiquinone. Couples the redox reaction to proton translocation (for every two electrons transferred, four hydrogen ions are translocated across the cytoplasmic membrane), and thus conserves the redox energy in a proton gradient. The protein is NADH-quinone oxidoreductase subunit K of Cupriavidus necator (strain ATCC 17699 / DSM 428 / KCTC 22496 / NCIMB 10442 / H16 / Stanier 337) (Ralstonia eutropha).